A 224-amino-acid polypeptide reads, in one-letter code: Orotate phosphoribosyltransferase (224 aa).

Residues Lys-26, 73 to 74, Arg-100, Lys-101, Lys-104, His-106, and 127 to 135 each bind 5-phospho-alpha-D-ribose 1-diphosphate; these read YK and EDVTTAGTS. The orotate site is built by Thr-131 and Arg-160.

This sequence belongs to the purine/pyrimidine phosphoribosyltransferase family. PyrE subfamily. Homodimer. Requires Mg(2+) as cofactor.

It catalyses the reaction orotidine 5'-phosphate + diphosphate = orotate + 5-phospho-alpha-D-ribose 1-diphosphate. The protein operates within pyrimidine metabolism; UMP biosynthesis via de novo pathway; UMP from orotate: step 1/2. In terms of biological role, catalyzes the transfer of a ribosyl phosphate group from 5-phosphoribose 1-diphosphate to orotate, leading to the formation of orotidine monophosphate (OMP). This Clostridium beijerinckii (strain ATCC 51743 / NCIMB 8052) (Clostridium acetobutylicum) protein is Orotate phosphoribosyltransferase.